Reading from the N-terminus, the 472-residue chain is Aspartyl/glutamyl-tRNA(Asn/Gln) amidotransferase subunit B (472 aa).

This sequence belongs to the GatB/GatE family. GatB subfamily. As to quaternary structure, heterotrimer of A, B and C subunits.

It carries out the reaction L-glutamyl-tRNA(Gln) + L-glutamine + ATP + H2O = L-glutaminyl-tRNA(Gln) + L-glutamate + ADP + phosphate + H(+). It catalyses the reaction L-aspartyl-tRNA(Asn) + L-glutamine + ATP + H2O = L-asparaginyl-tRNA(Asn) + L-glutamate + ADP + phosphate + 2 H(+). Functionally, allows the formation of correctly charged Asn-tRNA(Asn) or Gln-tRNA(Gln) through the transamidation of misacylated Asp-tRNA(Asn) or Glu-tRNA(Gln) in organisms which lack either or both of asparaginyl-tRNA or glutaminyl-tRNA synthetases. The reaction takes place in the presence of glutamine and ATP through an activated phospho-Asp-tRNA(Asn) or phospho-Glu-tRNA(Gln). The sequence is that of Aspartyl/glutamyl-tRNA(Asn/Gln) amidotransferase subunit B from Sulfolobus acidocaldarius (strain ATCC 33909 / DSM 639 / JCM 8929 / NBRC 15157 / NCIMB 11770).